Reading from the N-terminus, the 468-residue chain is Ribulose bisphosphate carboxylase large chain (468 aa).

Residue lysine 5 is modified to N6,N6,N6-trimethyllysine. Residues asparagine 114 and threonine 164 each coordinate substrate. Residue lysine 166 is the Proton acceptor of the active site. Lysine 168 serves as a coordination point for substrate. Mg(2+)-binding residues include lysine 192, aspartate 194, and glutamate 195. At lysine 192 the chain carries N6-carboxylysine. The active-site Proton acceptor is the histidine 285. 3 residues coordinate substrate: arginine 286, histidine 318, and serine 370.

The protein belongs to the RuBisCO large chain family. Type I subfamily. Heterohexadecamer of 8 large chains and 8 small chains; disulfide-linked. The disulfide link is formed within the large subunit homodimers. Mg(2+) serves as cofactor. Post-translationally, the disulfide bond which can form in the large chain dimeric partners within the hexadecamer appears to be associated with oxidative stress and protein turnover.

It is found in the plastid. The protein resides in the chloroplast. The enzyme catalyses 2 (2R)-3-phosphoglycerate + 2 H(+) = D-ribulose 1,5-bisphosphate + CO2 + H2O. It catalyses the reaction D-ribulose 1,5-bisphosphate + O2 = 2-phosphoglycolate + (2R)-3-phosphoglycerate + 2 H(+). Functionally, ruBisCO catalyzes two reactions: the carboxylation of D-ribulose 1,5-bisphosphate, the primary event in carbon dioxide fixation, as well as the oxidative fragmentation of the pentose substrate in the photorespiration process. Both reactions occur simultaneously and in competition at the same active site. The chain is Ribulose bisphosphate carboxylase large chain from Datura stramonium (Jimsonweed).